A 100-amino-acid polypeptide reads, in one-letter code: Large ribosomal subunit protein uL23 (100 aa).

Belongs to the universal ribosomal protein uL23 family. Part of the 50S ribosomal subunit. Contacts protein L29, and trigger factor when it is bound to the ribosome.

In terms of biological role, one of the early assembly proteins it binds 23S rRNA. One of the proteins that surrounds the polypeptide exit tunnel on the outside of the ribosome. Forms the main docking site for trigger factor binding to the ribosome. The chain is Large ribosomal subunit protein uL23 from Lacticaseibacillus casei (strain BL23) (Lactobacillus casei).